An 88-amino-acid chain; its full sequence is Probable Fe(2+)-trafficking protein (88 aa).

This sequence belongs to the Fe(2+)-trafficking protein family.

In terms of biological role, could be a mediator in iron transactions between iron acquisition and iron-requiring processes, such as synthesis and/or repair of Fe-S clusters in biosynthetic enzymes. The chain is Probable Fe(2+)-trafficking protein from Teredinibacter turnerae (strain ATCC 39867 / T7901).